We begin with the raw amino-acid sequence, 126 residues long: Probable prefoldin subunit 4 (126 aa).

This sequence belongs to the prefoldin subunit beta family. Heterohexamer of two PFD-alpha type and four PFD-beta type subunits.

Functionally, binds specifically to cytosolic chaperonin (c-CPN) and transfers target proteins to it. Binds to nascent polypeptide chain and promotes folding in an environment in which there are many competing pathways for nonnative proteins. Appears to play a non-essential role. The protein is Probable prefoldin subunit 4 of Caenorhabditis briggsae.